The following is a 351-amino-acid chain: S-adenosylmethionine:tRNA ribosyltransferase-isomerase (351 aa).

It belongs to the QueA family. As to quaternary structure, monomer.

It is found in the cytoplasm. The catalysed reaction is 7-aminomethyl-7-carbaguanosine(34) in tRNA + S-adenosyl-L-methionine = epoxyqueuosine(34) in tRNA + adenine + L-methionine + 2 H(+). The protein operates within tRNA modification; tRNA-queuosine biosynthesis. Functionally, transfers and isomerizes the ribose moiety from AdoMet to the 7-aminomethyl group of 7-deazaguanine (preQ1-tRNA) to give epoxyqueuosine (oQ-tRNA). The sequence is that of S-adenosylmethionine:tRNA ribosyltransferase-isomerase from Roseobacter denitrificans (strain ATCC 33942 / OCh 114) (Erythrobacter sp. (strain OCh 114)).